We begin with the raw amino-acid sequence, 185 residues long: Ribosome-recycling factor (185 aa).

This sequence belongs to the RRF family.

The protein localises to the cytoplasm. Responsible for the release of ribosomes from messenger RNA at the termination of protein biosynthesis. May increase the efficiency of translation by recycling ribosomes from one round of translation to another. The polypeptide is Ribosome-recycling factor (Streptococcus pyogenes serotype M18 (strain MGAS8232)).